A 162-amino-acid polypeptide reads, in one-letter code: Succinate dehydrogenase assembly factor 2, mitochondrial (162 aa).

The transit peptide at 1 to 35 directs the protein to the mitochondrion; it reads MHNMFPALTKTLSLQGYKIINSQTGSAAWSCGRRW.

Belongs to the SDHAF2 family. Interacts with the flavoprotein subunit within the SDH catalytic dimer.

The protein localises to the mitochondrion matrix. Plays an essential role in the assembly of succinate dehydrogenase (SDH), an enzyme complex (also referred to as respiratory complex II) that is a component of both the tricarboxylic acid (TCA) cycle and the mitochondrial electron transport chain, and which couples the oxidation of succinate to fumarate with the reduction of ubiquinone (coenzyme Q) to ubiquinol. Required for flavinylation (covalent attachment of FAD) of the flavoprotein subunit of the SDH catalytic dimer. The protein is Succinate dehydrogenase assembly factor 2, mitochondrial of Saccharomyces cerevisiae (strain RM11-1a) (Baker's yeast).